A 220-amino-acid polypeptide reads, in one-letter code: NADH-quinone oxidoreductase subunit I (220 aa).

4Fe-4S ferredoxin-type domains lie at 71 to 102 (LQRL…IITH) and 112 to 141 (DSYT…MGNR). [4Fe-4S] cluster-binding residues include C82, C85, C88, C92, C121, C124, C127, and C131. The disordered stretch occupies residues 187–220 (MQATPLDYVQEPSKEESKEETPTRSESHKGDENV). The segment covering 198-220 (PSKEESKEETPTRSESHKGDENV) has biased composition (basic and acidic residues).

Belongs to the complex I 23 kDa subunit family. NDH-1 is composed of 14 different subunits. Subunits NuoA, H, J, K, L, M, N constitute the membrane sector of the complex. It depends on [4Fe-4S] cluster as a cofactor.

It localises to the cell inner membrane. The enzyme catalyses a quinone + NADH + 5 H(+)(in) = a quinol + NAD(+) + 4 H(+)(out). NDH-1 shuttles electrons from NADH, via FMN and iron-sulfur (Fe-S) centers, to quinones in the respiratory chain. The immediate electron acceptor for the enzyme in this species is believed to be ubiquinone. Couples the redox reaction to proton translocation (for every two electrons transferred, four hydrogen ions are translocated across the cytoplasmic membrane), and thus conserves the redox energy in a proton gradient. This Helicobacter pylori (strain G27) protein is NADH-quinone oxidoreductase subunit I.